We begin with the raw amino-acid sequence, 874 residues long: Mannuronan C5-epimerase AlgE6 (874 aa).

8 PbH1 repeats span residues 133–155 (DRNVTIERVEVREMSGYGFDPHE), 157–179 (TINLVLRDSVAHHNGLDGFVADY), 180–202 (QIGGTFENNVAYANDRHGFNIVT), 204–226 (TNDFVMRNNVAYGNGGNGLVVQR), 234–256 (PENILIDGGSYYDNGLEGVLVKM), 257–279 (SNNVTVQNADIHGNGSSGVRVYG), 280–302 (AQGVQILGNQIHDNAKTAVAPEV), and 320–351 (TLNTRVEGNTITGSANSTYGVQERNDGTDFSS). Hemolysin-type calcium-binding repeat units follow at residues 383 to 394 (GTDGNDVLIGSD), 401 to 417 (GGAGDDRLDGGAGDDLL), 419 to 435 (GGAGRDRLTGGLGADTF), 562 to 578 (GGGGADQLYGYGGGDLL), 580 to 596 (GGAGRDRLTGGEGADTF), 723 to 739 (GGGGADQLYGYAGNDLL), and 741 to 757 (GGAGRDKLSGGEGADTF). Residues 401-420 (GGAGDDRLDGGAGDDLLDGG) form a disordered region.

The protein belongs to the D-mannuronate C5-epimerase family. It depends on Ca(2+) as a cofactor.

It localises to the secreted. The catalysed reaction is [(1-&gt;4)-beta-D-mannuronosyl](n) = [alginate](n). It functions in the pathway glycan biosynthesis; alginate biosynthesis. Inhibited by zinc. Functionally, converts beta-D-mannuronic acid (M) to alpha-L-guluronic acid (G), producing a polymer with gel-forming capacity, required for the formation of the cyst coat. The chain is Mannuronan C5-epimerase AlgE6 from Azotobacter vinelandii.